The chain runs to 60 residues: UPF0337 protein asr1134 (60 aa).

Basic and acidic residues-rich tracts occupy residues 1 to 18 and 29 to 60; these read MSLE…EGKA and PEDK…KKID. A disordered region spans residues 1–60; the sequence is MSLEDRAKATGKNIEGKAQEALGNVTGDPEDKAEGKAKQAESEVRHGVEDVKDNVKKKID.

It belongs to the UPF0337 (CsbD) family.

This is UPF0337 protein asr1134 from Nostoc sp. (strain PCC 7120 / SAG 25.82 / UTEX 2576).